The sequence spans 652 residues: Aorsin (652 aa).

The N-terminal stretch at 1–22 (MRPLSHLSFFNGLLLGLSALSA) is a signal peptide. A propeptide spans 23-215 (ATSVVHERRE…PRPIQQHDVK (193 aa)) (removed in mature form). An N-linked (GlcNAc...) asparagine glycan is attached at Asn112. The disordered stretch occupies residues 177-211 (VNLNPSSGKPSSIRRRAAASKKTKLPARGPRPIQQ). Residues 188-201 (SIRRRAAASKKTKL) are compositionally biased toward basic residues. Residues Asn218 and Asn247 are each glycosylated (N-linked (GlcNAc...) asparagine). A Peptidase S53 domain is found at 225-651 (LITPECIRAL…PKMLKLWLDL (427 aa)). Catalysis depends on charge relay system residues Glu301 and Asp305. Residues Asn331 and Asn445 are each glycosylated (N-linked (GlcNAc...) asparagine). Ser569 functions as the Charge relay system in the catalytic mechanism. Ca(2+) contacts are provided by Asp610 and Ile611. Asn613 carries N-linked (GlcNAc...) asparagine glycosylation. Ca(2+) contacts are provided by Gly629 and Asp631.

Ca(2+) serves as cofactor. Post-translationally, N-glycosylated. O-glycosylated.

The protein resides in the secreted. Its subcellular location is the extracellular space. Inhibited by antipain and leupeptin. Serine endopeptidase which hydrolyzes a range of fluorogenic peptide substrates containing the basic residues arginine or lysine at the P1 position and prefers paired basic resides. Also hydrolyzes clupeine and salmine, activates plasminogen and converts trypsinogen to trypsin. In Aspergillus oryzae (strain ATCC 42149 / RIB 40) (Yellow koji mold), this protein is Aorsin.